The primary structure comprises 255 residues: tRNA (guanine-N(1)-)-methyltransferase (255 aa).

Residues G117 and 137 to 142 (LGDFVL) each bind S-adenosyl-L-methionine.

Belongs to the RNA methyltransferase TrmD family. In terms of assembly, homodimer.

It localises to the cytoplasm. It catalyses the reaction guanosine(37) in tRNA + S-adenosyl-L-methionine = N(1)-methylguanosine(37) in tRNA + S-adenosyl-L-homocysteine + H(+). Its function is as follows. Specifically methylates guanosine-37 in various tRNAs. The sequence is that of tRNA (guanine-N(1)-)-methyltransferase from Paraburkholderia xenovorans (strain LB400).